The sequence spans 1006 residues: Probable beta-galactosidase A (1006 aa).

A signal peptide spans 1 to 18 (MKLLSVCAIALLAAQAAG). Substrate-binding residues include Tyr96, Asn140, Ala141, and Glu142. A glycan (N-linked (GlcNAc...) asparagine) is linked at Asn156. Residue Asn199 coordinates substrate. Glu200 functions as the Proton donor in the catalytic mechanism. Cysteines 205 and 206 form a disulfide. Residue Tyr260 coordinates substrate. A disulfide bridge connects residues Cys266 and Cys315. The active-site Nucleophile is the Glu298. Tyr364 contributes to the substrate binding site. N-linked (GlcNAc...) asparagine glycosylation is found at Asn373, Asn402, Asn422, Asn622, Asn760, Asn777, and Asn914.

It belongs to the glycosyl hydrolase 35 family.

The protein resides in the secreted. It catalyses the reaction Hydrolysis of terminal non-reducing beta-D-galactose residues in beta-D-galactosides.. Its function is as follows. Cleaves beta-linked terminal galactosyl residues from gangliosides, glycoproteins, and glycosaminoglycans. This Aspergillus fumigatus (strain ATCC MYA-4609 / CBS 101355 / FGSC A1100 / Af293) (Neosartorya fumigata) protein is Probable beta-galactosidase A (lacA).